Consider the following 415-residue polypeptide: Multidrug resistance protein MdtA (415 aa).

A signal peptide spans 1–21 (MKGSYKSRWVIVIVVVIAAIA). The span at 31–46 (DSQSAAPGATKQAQQS) shows a compositional bias: polar residues. 2 disordered regions span residues 31–56 (DSQS…GMRA) and 392–415 (EAQS…GARS). Basic and acidic residues predominate over residues 399 to 415 (PEEKATSREYAKKGARS).

Belongs to the membrane fusion protein (MFP) (TC 8.A.1) family. In terms of assembly, part of a tripartite efflux system composed of MdtA, MdtB and MdtC.

Its subcellular location is the cell inner membrane. Functionally, the MdtABC tripartite complex confers resistance against novobiocin and deoxycholate. The polypeptide is Multidrug resistance protein MdtA (Escherichia coli O6:K15:H31 (strain 536 / UPEC)).